The primary structure comprises 177 residues: R-phycoerythrin beta chain (177 aa).

Positions 35 and 39 each coordinate (2R,3E)-phycoerythrobilin. Cysteine 50, aspartate 54, and cysteine 61 together coordinate phycourobilin. (2R,3E)-phycoerythrobilin contacts are provided by residues asparagine 72, 77-78 (RR), cysteine 82, and 84-85 (RD). Residue asparagine 72 is modified to N4-methylasparagine. Phycourobilin is bound at residue 147–148 (SQ). The (2R,3E)-phycoerythrobilin site is built by isoleucine 154 and cysteine 158.

Belongs to the phycobiliprotein family. In terms of assembly, heterododecamer of 6 alpha and 6 beta chains. The basic functional unit of phycobiliproteins is a ring-shaped hexamer formed from two back-to-back trimers contacting via the alpha chain subunits. The trimers are composed of alpha/beta subunit heterodimers arranged around a three-fold axis of symmetry. The phycoerythrins also contain a gamma subunit which is located in the center of the hexamer. Contains two covalently linked phycoerythrobilin chromophores and one covalently linked phycourobilin chromophore.

The protein localises to the plastid. It localises to the chloroplast thylakoid membrane. Light-harvesting photosynthetic tetrapyrrole chromophore-protein from the phycobiliprotein complex. This chain is R-phycoerythrin beta chain (rpeB), found in Agarophyton chilense (Red seaweed).